The sequence spans 467 residues: Asparagine--tRNA ligase (467 aa).

It belongs to the class-II aminoacyl-tRNA synthetase family. As to quaternary structure, homodimer.

The protein localises to the cytoplasm. It carries out the reaction tRNA(Asn) + L-asparagine + ATP = L-asparaginyl-tRNA(Asn) + AMP + diphosphate + H(+). This Phocaeicola vulgatus (strain ATCC 8482 / DSM 1447 / JCM 5826 / CCUG 4940 / NBRC 14291 / NCTC 11154) (Bacteroides vulgatus) protein is Asparagine--tRNA ligase.